Reading from the N-terminus, the 542-residue chain is MFS-type efflux pump MMF1 (542 aa).

8 helical membrane-spanning segments follow: residues 24–44 (WTIF…MTMI), 51–71 (IVAA…AFLL), 98–118 (VIFL…VLVV), 124–144 (GLGG…LTTL), 151–171 (FGLI…LGGV), 179–199 (WIFW…VLFL), 215–235 (LDLV…IAVT), and 248–268 (VWVP…VEWI). N-linked (GlcNAc...) asparagine glycosylation occurs at asparagine 285. 6 helical membrane-spanning segments follow: residues 296-316 (FLHG…FQAI), 326-346 (IWSF…GLLI), 355-375 (LIFI…HWSV), 384-404 (ISQI…LPPI), 419-439 (AYAF…TTIF), and 490-510 (ISDS…STFL).

The protein belongs to the major facilitator superfamily.

It localises to the cell membrane. Its function is as follows. Glycosyltransferase; part of the gene cluster that mediates the biosynthesis of mannosylerythritol lipids (MELs), surface-active substances that enhance the availability of water-insoluble substrates. MMF1 is directly involved in the secretiopn of MALs. The polypeptide is MFS-type efflux pump MMF1 (Pseudozyma antarctica (strain T-34) (Yeast)).